The primary structure comprises 379 residues: Cytochrome b (379 aa).

Transmembrane regions (helical) follow at residues 33–53, 77–98, 113–133, and 178–198; these read LGSLLGTCLIMQILTGLFLAM, WTIRHLHANGASMFFMCLYLHI, WNTGVMLLLTVMATAFMGYVL, and FFTLHFIAPFIILALVLTHLL. Heme b-binding residues include His83 and His97. Heme b-binding residues include His182 and His196. His201 provides a ligand contact to a ubiquinone. A run of 4 helical transmembrane segments spans residues 226 to 246, 288 to 308, 320 to 340, and 347 to 367; these read IKDILGLLIMILTTLALTLLH, LGGVLTLICSILVLVIIPMTH, ISQCLFWILTADLLILTWIGG, and FTTIGLLASILYFTTILILTP.

Belongs to the cytochrome b family. In terms of assembly, the cytochrome bc1 complex contains 11 subunits: 3 respiratory subunits (MT-CYB, CYC1 and UQCRFS1), 2 core proteins (UQCRC1 and UQCRC2) and 6 low-molecular weight proteins (UQCRH/QCR6, UQCRB/QCR7, UQCRQ/QCR8, UQCR10/QCR9, UQCR11/QCR10 and a cleavage product of UQCRFS1). This cytochrome bc1 complex then forms a dimer. It depends on heme b as a cofactor.

It is found in the mitochondrion inner membrane. Functionally, component of the ubiquinol-cytochrome c reductase complex (complex III or cytochrome b-c1 complex) that is part of the mitochondrial respiratory chain. The b-c1 complex mediates electron transfer from ubiquinol to cytochrome c. Contributes to the generation of a proton gradient across the mitochondrial membrane that is then used for ATP synthesis. In Bradypus tridactylus (Pale-throated three-toed sloth), this protein is Cytochrome b (MT-CYB).